Consider the following 494-residue polypeptide: MFRVQKELVSHEAVIVALFEEDKKSSFVQELDKAFEGQLQVLLEEKELSTKKKAISKVHSLGKTNVKRYYFVGLGKKESYTTETLRAALGKAFKALQAAKVQDAAILLDSFVTDKLDAIDVAHIAAEVQGLGTYELQTYKADKKDRVELEKFTAITAEDAQEIEAALTVGYVHGRATNSARTLVNMPPNVLTATKLAEYAVELAEKYDMDYKVLEKEEMEELGMGALLAVNQGSTEPPKMIALIYKGKEEWKDVIGFVGKGITYDTGGYSLKPREGMVGMKGDMGGAAAVLGAMEIIGELRPEQNVIAVIPSTDNVVSGTAFKPDDVITSMSGKTIEVLNTDAEGRLALADGITYAKKLGANYLVDVATLTGGVIVALGNHTTGAMTNNEELFEQVLEASMETDEPIWQLPIFERDKERVKNSKFADLNNSPGREGHAVMAGTFIGEFAEETPWVHLDIAGTSETSGAHDLGPSGATGAMVRTLATLVERFGEE.

Positions 260 and 265 each coordinate Mn(2+). Lys-272 is an active-site residue. Asp-283, Asp-342, and Glu-344 together coordinate Mn(2+). The active site involves Arg-346.

It belongs to the peptidase M17 family. Mn(2+) is required as a cofactor.

The protein resides in the cytoplasm. The enzyme catalyses Release of an N-terminal amino acid, Xaa-|-Yaa-, in which Xaa is preferably Leu, but may be other amino acids including Pro although not Arg or Lys, and Yaa may be Pro. Amino acid amides and methyl esters are also readily hydrolyzed, but rates on arylamides are exceedingly low.. The catalysed reaction is Release of an N-terminal amino acid, preferentially leucine, but not glutamic or aspartic acids.. Its function is as follows. Presumably involved in the processing and regular turnover of intracellular proteins. Catalyzes the removal of unsubstituted N-terminal amino acids from various peptides. This is Probable cytosol aminopeptidase from Bacillus mycoides (strain KBAB4) (Bacillus weihenstephanensis).